The primary structure comprises 157 residues: Protein Smg (157 aa).

Belongs to the Smg family.

The chain is Protein Smg from Escherichia coli O8 (strain IAI1).